A 1523-amino-acid polypeptide reads, in one-letter code: ATP-binding cassette sub-family C member 3 (1523 aa).

Topologically, residues 1–35 (MDRLCGSGELGSKFWDSNLSIYTNTPDLTPCFQNS) are extracellular. N-linked (GlcNAc...) asparagine glycosylation occurs at asparagine 18. A helical membrane pass occupies residues 36-56 (LLAWVPCIYLWAALPCYLFYL). Residues 57 to 75 (RHHQLGYIVLSWLSRLKTA) are Cytoplasmic-facing. The chain crosses the membrane as a helical span at residues 76–96 (LGVLLWCVSWVDLFYSFHGLI). At 97–102 (HGSSPA) the chain is on the extracellular side. The chain crosses the membrane as a helical span at residues 103–123 (PVFFVTPLVVGITMLLATLLI). Over 124-129 (QYERLR) the chain is Cytoplasmic. A helical membrane pass occupies residues 130–150 (GVQSSGVLIIFWLLCVICAII). Residues 151–170 (PFRSKILSALAEGKILDPFR) are Extracellular-facing. Residues 171 to 191 (FTTFYIYFALVFCALILSCFK) traverse the membrane as a helical segment. Topologically, residues 192 to 301 (EKPPLFSPEN…KSKQPSFLRA (110 aa)) are cytoplasmic. The chain crosses the membrane as a helical span at residues 302 to 324 (LVRTFTSSLLMSACFNLIQNLLG). Residues 310-593 (LLMSACFNLI…LPQLISGLTQ (284 aa)) enclose the ABC transmembrane type-1 1 domain. Topologically, residues 325–345 (FVNPQLLSILIRFISDPTAPT) are extracellular. The helical transmembrane segment at 346–366 (WWGFLLAGLMFLSSTMQTLIL) threads the bilayer. Residues 367 to 419 (HQYYHCIFVMALRLRTAIIGVIYRKALVITNSVKRESTVGEMVNLMSVDAQRF) are Cytoplasmic-facing. A helical membrane pass occupies residues 420–440 (MDVSPFINLLWSAPLQVILAI). Residue tyrosine 441 is a topological domain, extracellular. Residues 442–462 (FLWQILGPSALAGVAVIVLLI) form a helical membrane-spanning segment. Over 463–535 (PLNGAVSMKM…KGAYLQAIST (73 aa)) the chain is Cytoplasmic. Residues 536 to 556 (FIWICTPFLVTLITLGVYVYV) traverse the membrane as a helical segment. Over 557 to 567 (DESNVLDAEKA) the chain is Extracellular. A helical transmembrane segment spans residues 568 to 588 (FVSLSLFNILKIPLNMLPQLI). The Cytoplasmic portion of the chain corresponds to 589–967 (SGLTQASVSL…YAKSMGLCTT (379 aa)). An ABC transporter 1 domain is found at 626–850 (ITIHNGTFTW…DGSFANFLRN (225 aa)). 660-667 (GPVGCGKS) serves as a coordination point for ATP. A phosphoserine mark is found at serine 903 and serine 906. The segment covering 903–915 (SSLSSEGEVQNRT) has biased composition (polar residues). A disordered region spans residues 903-923 (SSLSSEGEVQNRTMPKKHTNS). The ABC transmembrane type-1 2 domain occupies 967–1248 (TLSICLLYGG…MIRMISDLES (282 aa)). The helical transmembrane segment at 968 to 988 (LSICLLYGGQSAAAIGANVWL) threads the bilayer. Topologically, residues 989–1013 (SAWSNDAEEHGQQNKTSVRLGVYAA) are extracellular. A glycan (N-linked (GlcNAc...) asparagine) is linked at asparagine 1002. Residues 1014-1034 (LGILQGLLVMLSAFTMVVGAI) form a helical membrane-spanning segment. The Cytoplasmic segment spans residues 1035 to 1071 (QAARLLHEALLHNKIRSPQSFFDTTPSGRILNRFSKD). A helical membrane pass occupies residues 1072-1092 (IYVIDEVLAPTILMLLNSFFT). Residues 1093–1096 (SIST) lie on the Extracellular side of the membrane. Residues 1097–1117 (IMVIVASTPLFMVVVLPLAVL) form a helical membrane-spanning segment. The Cytoplasmic segment spans residues 1118 to 1191 (YGFVQRFYVA…YPYIASNRWL (74 aa)). Residues 1192 to 1212 (GVHVEFVGNCVVLFAALFAVI) traverse the membrane as a helical segment. Topologically, residues 1213-1219 (GRNSLNP) are extracellular. Residues 1220–1240 (GLVGLSVSYALQVTMALNWMI) form a helical membrane-spanning segment. Residues 1241-1523 (RMISDLESNI…YGMAKDAGLA (283 aa)) are Cytoplasmic-facing. In terms of domain architecture, ABC transporter 2 spans 1287–1519 (FRNYSVRYRP…GGIFYGMAKD (233 aa)). Residue 1319-1326 (GRTGAGKS) coordinates ATP.

Belongs to the ABC transporter superfamily. ABCC family. Conjugate transporter (TC 3.A.1.208) subfamily. Detected throughout the gastrointestinal tract, liver, lung, pancreas, bladder, gall bladder and at low levels in the adrenal gland.

Its subcellular location is the basolateral cell membrane. It is found in the basal cell membrane. It carries out the reaction an S-substituted glutathione(in) + ATP + H2O = an S-substituted glutathione(out) + ADP + phosphate + H(+). It catalyses the reaction ATP + H2O + xenobioticSide 1 = ADP + phosphate + xenobioticSide 2.. The enzyme catalyses 17beta-estradiol 17-O-(beta-D-glucuronate)(in) + ATP + H2O = 17beta-estradiol 17-O-(beta-D-glucuronate)(out) + ADP + phosphate + H(+). The catalysed reaction is dehydroepiandrosterone 3-sulfate(in) + ATP + H2O = dehydroepiandrosterone 3-sulfate(out) + ADP + phosphate + H(+). It carries out the reaction leukotriene C4(in) + ATP + H2O = leukotriene C4(out) + ADP + phosphate + H(+). It catalyses the reaction taurocholate(in) + ATP + H2O = taurocholate(out) + ADP + phosphate + H(+). The enzyme catalyses glycocholate(in) + ATP + H2O = glycocholate(out) + ADP + phosphate + H(+). The catalysed reaction is taurolithocholate 3-sulfate(in) + ATP + H2O = taurolithocholate 3-sulfate(out) + ADP + phosphate + H(+). It carries out the reaction taurochenodeoxycholate 3-sulfate(in) + ATP + H2O = taurochenodeoxycholate 3-sulfate(out) + ADP + phosphate + H(+). It catalyses the reaction (4Z,15Z)-bilirubin IXalpha C8-beta-D-glucuronoside(in) + ATP + H2O = (4Z,15Z)-bilirubin IXalpha C8-beta-D-glucuronoside(out) + ADP + phosphate + H(+). The enzyme catalyses (4Z,15Z)-bilirubin IXalpha C8,C12-beta-D-bisglucuronoside(in) + ATP + H2O = (4Z,15Z)-bilirubin IXalpha C8,C12-beta-D-bisglucuronoside(out) + ADP + phosphate + H(+). Functionally, ATP-dependent transporter of the ATP-binding cassette (ABC) family that binds and hydrolyzes ATP to enable active transport of various substrates including many drugs, toxicants and endogenous compound across cell membranes. Transports glucuronide conjugates such as bilirubin diglucuronide, estradiol-17-beta-o-glucuronide and GSH conjugates such as leukotriene C4 (LTC4). Transports also various bile salts (taurocholate, glycocholate, taurochenodeoxycholate-3-sulfate, taurolithocholate- 3-sulfate). Does not contribute substantially to bile salt physiology but provides an alternative route for the export of bile acids and glucuronides from cholestatic hepatocytes. May contribute to regulate the transport of organic compounds in testes across the blood-testis-barrier. This is ATP-binding cassette sub-family C member 3 (Abcc3) from Mus musculus (Mouse).